Reading from the N-terminus, the 159-residue chain is Ribosomal RNA large subunit methyltransferase H (159 aa).

Residues Leu76, Gly108, and 127-132 (FSKMTF) each bind S-adenosyl-L-methionine.

It belongs to the RNA methyltransferase RlmH family. In terms of assembly, homodimer.

Its subcellular location is the cytoplasm. The enzyme catalyses pseudouridine(1915) in 23S rRNA + S-adenosyl-L-methionine = N(3)-methylpseudouridine(1915) in 23S rRNA + S-adenosyl-L-homocysteine + H(+). Specifically methylates the pseudouridine at position 1915 (m3Psi1915) in 23S rRNA. This Clostridium botulinum (strain Alaska E43 / Type E3) protein is Ribosomal RNA large subunit methyltransferase H.